We begin with the raw amino-acid sequence, 309 residues long: MEPENDTGISEFVLLGLSEEPELQPFLFGLFLSMYLVTVLGNLLIILATISDSHLHTPMYFFLSNLSFADICFISTTIPKMLINIQTQSRVITYAGCITQMCFFVLFGGLDSLLLAVMAYDRFVAICHPLHYTVIMNPRLCGLLVLASWMIAALNSLSQSLMVLWLSFCTDLEIPHFFCELNQVIHLACSDTFLNDMGMYFAAGLLAGGPLVGILCSYSKIVSSIRAISSAQGKYKAFSTCASHLSVVSLFCCTGLGVYLTSAATHNSHTSATASVMYTVATPMLNPFIYSLRNKDIKRALKMSFRGKQ.

At 1-25 (MEPENDTGISEFVLLGLSEEPELQP) the chain is on the extracellular side. The N-linked (GlcNAc...) asparagine glycan is linked to N5. The helical transmembrane segment at 26 to 46 (FLFGLFLSMYLVTVLGNLLII) threads the bilayer. Residues 47–54 (LATISDSH) lie on the Cytoplasmic side of the membrane. A helical transmembrane segment spans residues 55 to 75 (LHTPMYFFLSNLSFADICFIS). At 76–99 (TTIPKMLINIQTQSRVITYAGCIT) the chain is on the extracellular side. C97 and C189 form a disulfide bridge. Residues 100-120 (QMCFFVLFGGLDSLLLAVMAY) form a helical membrane-spanning segment. Over 121-139 (DRFVAICHPLHYTVIMNPR) the chain is Cytoplasmic. The chain crosses the membrane as a helical span at residues 140–160 (LCGLLVLASWMIAALNSLSQS). Residues 161-197 (LMVLWLSFCTDLEIPHFFCELNQVIHLACSDTFLNDM) are Extracellular-facing. Residues 198 to 217 (GMYFAAGLLAGGPLVGILCS) traverse the membrane as a helical segment. At 218 to 237 (YSKIVSSIRAISSAQGKYKA) the chain is on the cytoplasmic side. Residues 238–258 (FSTCASHLSVVSLFCCTGLGV) traverse the membrane as a helical segment. The Extracellular portion of the chain corresponds to 259-271 (YLTSAATHNSHTS). Residues 272 to 292 (ATASVMYTVATPMLNPFIYSL) form a helical membrane-spanning segment. Topologically, residues 293–309 (RNKDIKRALKMSFRGKQ) are cytoplasmic.

Belongs to the G-protein coupled receptor 1 family.

It is found in the cell membrane. Odorant receptor. The protein is Olfactory receptor 7A17 (OR7A17) of Homo sapiens (Human).